We begin with the raw amino-acid sequence, 392 residues long: Succinate--CoA ligase [ADP-forming] subunit beta (392 aa).

Residues 9 to 247 enclose the ATP-grasp domain; that stretch reads KEILRVCGVP…LYEEDPKEIE (239 aa). ATP is bound by residues Lys49, 56–58, Glu102, Gln105, and Glu110; that span reads GRG. Asn202 and Asp216 together coordinate Mg(2+). Substrate is bound by residues Asn267 and 324–326; that span reads GIM.

It belongs to the succinate/malate CoA ligase beta subunit family. In terms of assembly, heterotetramer of two alpha and two beta subunits. Mg(2+) is required as a cofactor.

The catalysed reaction is succinate + ATP + CoA = succinyl-CoA + ADP + phosphate. It carries out the reaction GTP + succinate + CoA = succinyl-CoA + GDP + phosphate. It participates in carbohydrate metabolism; tricarboxylic acid cycle; succinate from succinyl-CoA (ligase route): step 1/1. Succinyl-CoA synthetase functions in the citric acid cycle (TCA), coupling the hydrolysis of succinyl-CoA to the synthesis of either ATP or GTP and thus represents the only step of substrate-level phosphorylation in the TCA. The beta subunit provides nucleotide specificity of the enzyme and binds the substrate succinate, while the binding sites for coenzyme A and phosphate are found in the alpha subunit. The chain is Succinate--CoA ligase [ADP-forming] subunit beta from Neorickettsia sennetsu (strain ATCC VR-367 / Miyayama) (Ehrlichia sennetsu).